The sequence spans 347 residues: DNA primase small subunit PriS (347 aa).

Active-site residues include Asp95 and Asp97. Zn(2+)-binding residues include Cys106, His108, Cys114, and Cys117. Positions 106-117 match the Zinc knuckle motif motif; that stretch reads CNHEPGTVCPIC. The active site involves Asp280.

It belongs to the eukaryotic-type primase small subunit family. In terms of assembly, heterodimer of a small subunit (PriS) and a large subunit (PriL). Both participate in formation of the active center, but the ATP-binding site is exclusively located on the small subunit. Mg(2+) serves as cofactor. The cofactor is Mn(2+).

Its function is as follows. Catalytic subunit of DNA primase, an RNA polymerase that catalyzes the synthesis of short RNA molecules used as primers for DNA polymerase during DNA replication. The small subunit contains the primase catalytic core and has DNA synthesis activity on its own. Binding to the large subunit stabilizes and modulates the activity, increasing the rate of DNA synthesis while decreasing the length of the DNA fragments, and conferring RNA synthesis capability. The DNA polymerase activity may enable DNA primase to also catalyze primer extension after primer synthesis. May also play a role in DNA repair. This chain is DNA primase small subunit PriS, found in Pyrococcus furiosus (strain ATCC 43587 / DSM 3638 / JCM 8422 / Vc1).